Reading from the N-terminus, the 172-residue chain is L-amino acid oxidase (172 aa).

44-47 (GPMR) is an FAD binding site. Substrate is bound by residues arginine 47 and histidine 103.

Belongs to the flavin monoamine oxidase family. FIG1 subfamily. In terms of assembly, heterodimer; non-covalently linked. FAD is required as a cofactor. Post-translationally, N-glycosylated. In terms of tissue distribution, expressed by the venom gland.

The protein localises to the secreted. It carries out the reaction an L-alpha-amino acid + O2 + H2O = a 2-oxocarboxylate + H2O2 + NH4(+). The catalysed reaction is L-leucine + O2 + H2O = 4-methyl-2-oxopentanoate + H2O2 + NH4(+). The enzyme catalyses L-phenylalanine + O2 + H2O = 3-phenylpyruvate + H2O2 + NH4(+). It catalyses the reaction L-tryptophan + O2 + H2O = indole-3-pyruvate + H2O2 + NH4(+). It carries out the reaction L-methionine + O2 + H2O = 4-methylsulfanyl-2-oxobutanoate + H2O2 + NH4(+). The catalysed reaction is L-isoleucine + O2 + H2O = (S)-3-methyl-2-oxopentanoate + H2O2 + NH4(+). The enzyme catalyses L-arginine + O2 + H2O = 5-guanidino-2-oxopentanoate + H2O2 + NH4(+). It catalyses the reaction L-tyrosine + O2 + H2O = 3-(4-hydroxyphenyl)pyruvate + H2O2 + NH4(+). With respect to regulation, activity is increased by Mn(2+) ions. Inhibited by Zn(2+), Ni(2+), Co(2+), Cu(2+) and Al(3+). No significant activity change by Na(+), K(+), Ca(2+), Mg(2+) and Ba(2+) ions. Both isoform are completely inhibited by L-Cys and reduced glutathione. O-phenanthroline, beta-mercaptoethanol and PMSF completely inhibit the enzymatic activity of LAAOII, but have no activity on LAAOI. Iodoacetic acid inhibits the enzymatic activity of LAAOII by 46% but has no effect on the LAAOI activity. Catalyzes an oxidative deamination of predominantly hydrophobic and aromatic L-amino acids, thus producing hydrogen peroxide that may contribute to the diverse toxic effects of this enzyme. Shows high specificity for L-Arg, L-Met, L-Phe, L-Leu, L-Tyr, L-Ile and L-Trp, low specificity for L-Val, L-Ala, L-Asn, L-Gln, and no specificity for L-Pro, L-Ser, L-Thr, L-Cys, L-Gly and L-Asp. Exhibits diverse biological activities, such as hemorrhage, hemolysis, edema, antibacterial and antiparasitic activities, as well as regulation of platelet aggregation. Its effect on platelets is controversial, since it either induces aggregation or inhibits agonist-induced aggregation. These different effects are probably due to different experimental conditions. The polypeptide is L-amino acid oxidase (Cerastes cerastes (Horned desert viper)).